The primary structure comprises 407 residues: Phosphopentomutase (407 aa).

Mn(2+) contacts are provided by aspartate 10, aspartate 306, histidine 311, aspartate 347, histidine 348, and histidine 359.

Belongs to the phosphopentomutase family. Mn(2+) serves as cofactor.

The protein resides in the cytoplasm. The catalysed reaction is 2-deoxy-alpha-D-ribose 1-phosphate = 2-deoxy-D-ribose 5-phosphate. The enzyme catalyses alpha-D-ribose 1-phosphate = D-ribose 5-phosphate. The protein operates within carbohydrate degradation; 2-deoxy-D-ribose 1-phosphate degradation; D-glyceraldehyde 3-phosphate and acetaldehyde from 2-deoxy-alpha-D-ribose 1-phosphate: step 1/2. Functionally, isomerase that catalyzes the conversion of deoxy-ribose 1-phosphate (dRib-1-P) and ribose 1-phosphate (Rib-1-P) to deoxy-ribose 5-phosphate (dRib-5-P) and ribose 5-phosphate (Rib-5-P), respectively. This is Phosphopentomutase from Yersinia pseudotuberculosis serotype O:1b (strain IP 31758).